We begin with the raw amino-acid sequence, 160 residues long: Lipoprotein signal peptidase (160 aa).

3 consecutive transmembrane segments (helical) span residues 13–33 (IYIT…HLII), 72–92 (WFLS…ITKL), and 104–124 (SLII…GFVV). Active-site residues include D125 and D143. The helical transmembrane segment at 134 to 154 (WHFATFNIADCSIFIGIIILM) threads the bilayer.

It belongs to the peptidase A8 family.

The protein resides in the cell inner membrane. The catalysed reaction is Release of signal peptides from bacterial membrane prolipoproteins. Hydrolyzes -Xaa-Yaa-Zaa-|-(S,diacylglyceryl)Cys-, in which Xaa is hydrophobic (preferably Leu), and Yaa (Ala or Ser) and Zaa (Gly or Ala) have small, neutral side chains.. Its pathway is protein modification; lipoprotein biosynthesis (signal peptide cleavage). Its function is as follows. This protein specifically catalyzes the removal of signal peptides from prolipoproteins. The polypeptide is Lipoprotein signal peptidase (Buchnera aphidicola subsp. Acyrthosiphon pisum (strain Tuc7)).